Reading from the N-terminus, the 1097-residue chain is Protease Do-like 7 (1097 aa).

The segment at 55-243 (VLRTTACRAF…LPLQRVVRAL (189 aa)) is serine protease. The region spanning 269-366 (MTFLHKGFDE…RGGQPLSVSV (98 aa)) is the PDZ domain. Residue His524 is the Charge relay system of the active site. A compositionally biased stretch (polar residues) spans 546–556 (TSSGDGSQNDF). Residues 546-577 (TSSGDGSQNDFGSEAKKQRVDEDSSDGIAANG) are disordered. Positions 558–567 (SEAKKQRVDE) are enriched in basic and acidic residues. Catalysis depends on Ser785, which acts as the Charge relay system.

The protein belongs to the peptidase S1C family.

The protein localises to the cytoplasm. Probable serine protease. This is Protease Do-like 7 (DEGP7) from Arabidopsis thaliana (Mouse-ear cress).